A 297-amino-acid polypeptide reads, in one-letter code: Putative F-box protein At2g19630 (297 aa).

The region spanning 11-60 is the F-box domain; that stretch reads TKNSLQIPIDLIIEIFLRLSVNSIARCRCVSKQWASTLSRPYFTELFLTR.

The polypeptide is Putative F-box protein At2g19630 (Arabidopsis thaliana (Mouse-ear cress)).